We begin with the raw amino-acid sequence, 264 residues long: tRNA (guanine-N(1)-)-methyltransferase (264 aa).

Residues Gly-120 and 140 to 145 (IGDYVL) each bind S-adenosyl-L-methionine.

Belongs to the RNA methyltransferase TrmD family. Homodimer.

Its subcellular location is the cytoplasm. It catalyses the reaction guanosine(37) in tRNA + S-adenosyl-L-methionine = N(1)-methylguanosine(37) in tRNA + S-adenosyl-L-homocysteine + H(+). Functionally, specifically methylates guanosine-37 in various tRNAs. The protein is tRNA (guanine-N(1)-)-methyltransferase of Halorhodospira halophila (strain DSM 244 / SL1) (Ectothiorhodospira halophila (strain DSM 244 / SL1)).